The following is a 106-amino-acid chain: MAPLIPGELLTEPGELELNAGRPVTTLSVSNSGDRPVQVGSHFHFAEANAALQFDRAAARGQRLDIPAGTAIRFEPGDSRDVNLIPFAGARCVIGFNGQINGPLDA.

Belongs to the urease beta subunit family. As to quaternary structure, heterotrimer of UreA (gamma), UreB (beta) and UreC (alpha) subunits. Three heterotrimers associate to form the active enzyme.

Its subcellular location is the cytoplasm. The catalysed reaction is urea + 2 H2O + H(+) = hydrogencarbonate + 2 NH4(+). It participates in nitrogen metabolism; urea degradation; CO(2) and NH(3) from urea (urease route): step 1/1. The polypeptide is Urease subunit beta (Synechococcus sp. (strain CC9605)).